We begin with the raw amino-acid sequence, 315 residues long: Ornithine carbamoyltransferase, anabolic (315 aa).

Residues 57-60 (STRT), Q84, R108, and 135-138 (HPCQ) each bind carbamoyl phosphate. L-ornithine contacts are provided by residues N166, D230, and 234–235 (SM). Residues 270–271 (CL) and R298 each bind carbamoyl phosphate.

The protein belongs to the aspartate/ornithine carbamoyltransferase superfamily. OTCase family. In terms of assembly, homododecamer (tetramer of trimers).

Its subcellular location is the cytoplasm. The enzyme catalyses carbamoyl phosphate + L-ornithine = L-citrulline + phosphate + H(+). It functions in the pathway amino-acid biosynthesis; L-arginine biosynthesis; L-arginine from L-ornithine and carbamoyl phosphate: step 1/3. With respect to regulation, inhibited by the bisubstrate delta-N-phosphonoacetyl-L-ornithine (PALO). Functionally, reversibly catalyzes the transfer of the carbamoyl group from carbamoyl phosphate (CP) to the N(epsilon) atom of ornithine (ORN) to produce L-citrulline, which is a substrate for argininosuccinate synthetase, the enzyme involved in the final step in arginine biosynthesis. In Pyrococcus furiosus (strain ATCC 43587 / DSM 3638 / JCM 8422 / Vc1), this protein is Ornithine carbamoyltransferase, anabolic.